A 294-amino-acid chain; its full sequence is Proteasome subunit beta 1 (294 aa).

Residues 1 to 65 (MTADRPALRT…MESGDLAPHG (65 aa)) constitute a propeptide, removed in mature form; by autocatalysis. The Nucleophile role is filled by Thr66.

It belongs to the peptidase T1B family. As to quaternary structure, the 20S proteasome core is composed of 14 alpha and 14 beta subunits that assemble into four stacked heptameric rings, resulting in a barrel-shaped structure. The two inner rings, each composed of seven catalytic beta subunits, are sandwiched by two outer rings, each composed of seven alpha subunits. All four combinations of alpha- and beta-subunits (beta2-alpha1, beta2-alpha2, beta1-alpha2 and beta1-alpha1) yield fully assembled and proteolytically active proteasomes. The catalytic chamber with the active sites is on the inside of the barrel. Has probably a gated structure, the ends of the cylinder being occluded by the N-termini of the alpha-subunits. Is likely capped by the proteasome-associated ATPase, ARC.

The protein resides in the cytoplasm. The catalysed reaction is Cleavage of peptide bonds with very broad specificity.. It participates in protein degradation; proteasomal Pup-dependent pathway. The formation of the proteasomal ATPase ARC-20S proteasome complex, likely via the docking of the C-termini of ARC into the intersubunit pockets in the alpha-rings, may trigger opening of the gate for substrate entry. Interconversion between the open-gate and close-gate conformations leads to a dynamic regulation of the 20S proteasome proteolysis activity. In terms of biological role, component of the proteasome core, a large protease complex with broad specificity involved in protein degradation. The R.erythropolis proteasomes are able to cleave oligopeptides after Tyr, Phe and Leu, very poorly after Arg but not after Glu. Thus, displays chymotrypsin-like activity, low trypsin-like activity but no caspase-like activity. In Rhodococcus erythropolis (Arthrobacter picolinophilus), this protein is Proteasome subunit beta 1.